The primary structure comprises 261 residues: uncharacterized protein (261 aa).

Positions 33, 60, 78, and 105 each coordinate NADP(+). Catalysis depends on Ser157, which acts as the Proton donor. Residues Tyr172, Lys176, and Thr206 each coordinate NADP(+). The active-site Proton acceptor is the Tyr172. The Lowers pKa of active site Tyr role is filled by Lys176.

It belongs to the short-chain dehydrogenases/reductases (SDR) family.

It localises to the cytoplasm. The protein localises to the nucleus. This is an uncharacterized protein from Schizosaccharomyces pombe (strain 972 / ATCC 24843) (Fission yeast).